A 311-amino-acid polypeptide reads, in one-letter code: Cytosolic Fe-S cluster assembly factor Nubp1 homolog (311 aa).

[4Fe-4S] cluster contacts are provided by Cys9, Cys23, Cys26, and Cys32. 63 to 70 is a binding site for ATP; it reads GKGGVGKS. Cys240 and Cys243 together coordinate [4Fe-4S] cluster.

The protein belongs to the Mrp/NBP35 ATP-binding proteins family. NUBP1/NBP35 subfamily. In terms of assembly, heterotetramer of 2 Nubp1 and 2 Nubp2 chains. [4Fe-4S] cluster is required as a cofactor.

The protein localises to the cytoplasm. Its function is as follows. Component of the cytosolic iron-sulfur (Fe/S) protein assembly (CIA) machinery. Required for maturation of extramitochondrial Fe-S proteins. The Nubp1-Nubp2 heterotetramer forms a Fe-S scaffold complex, mediating the de novo assembly of an Fe-S cluster and its transfer to target apoproteins. The sequence is that of Cytosolic Fe-S cluster assembly factor Nubp1 homolog from Drosophila pseudoobscura pseudoobscura (Fruit fly).